A 125-amino-acid polypeptide reads, in one-letter code: Small ribosomal subunit protein uS13 (125 aa).

Positions 94-125 are disordered; that stretch reads SLPVRGQRTQTNARTRKGKRKTVAGKKKAVKK. Basic residues predominate over residues 107–125; the sequence is RTRKGKRKTVAGKKKAVKK.

The protein belongs to the universal ribosomal protein uS13 family. Part of the 30S ribosomal subunit. Forms a loose heterodimer with protein S19. Forms two bridges to the 50S subunit in the 70S ribosome.

Functionally, located at the top of the head of the 30S subunit, it contacts several helices of the 16S rRNA. In the 70S ribosome it contacts the 23S rRNA (bridge B1a) and protein L5 of the 50S subunit (bridge B1b), connecting the 2 subunits; these bridges are implicated in subunit movement. Contacts the tRNAs in the A and P-sites. In Prosthecochloris aestuarii (strain DSM 271 / SK 413), this protein is Small ribosomal subunit protein uS13.